Here is a 175-residue protein sequence, read N- to C-terminus: Protein CENTRORADIALIS-like (175 aa).

It belongs to the phosphatidylethanolamine-binding protein family. Expressed in tissues surrounding vascular bundles in hypocotyl of 2-week-old plants.

Its subcellular location is the cytoplasm. Functionally, may form complexes with phosphorylated ligands by interfering with kinases and their effectors. Can substitute for TERMINAL FLOWER 1 (in vitro). In Arabidopsis thaliana (Mouse-ear cress), this protein is Protein CENTRORADIALIS-like (CEN).